A 650-amino-acid chain; its full sequence is A-kinase anchor protein 10, mitochondrial (650 aa).

A mitochondrion-targeting transit peptide spans 1-16 (RALRPDPGPAMSFFRR). 2 disordered regions span residues 1 to 45 (RALR…QKST) and 168 to 192 (SSLA…ESLD). At Ser-40 the chain carries Phosphoserine. RGS domains are found at residues 113 to 356 (TLEQ…CKYQ) and 366 to 493 (YLAD…YKYL). Ser-268 bears the Phosphoserine mark. The tract at residues 512-535 (LAAQGSGGPPDDPLPGASDPSASQ) is disordered. Over residues 525 to 535 (LPGASDPSASQ) the composition is skewed to low complexity. A PKA-RII subunit binding region spans residues 622 to 635 (LAWKIAKMIVSDVM).

The protein localises to the mitochondrion. Its subcellular location is the membrane. It is found in the cytoplasm. Its function is as follows. Differentially targeted protein that binds to type I and II regulatory subunits of protein kinase A and anchors them to the mitochondria or the plasma membrane. Although the physiological relevance between PKA and AKAPS with mitochondria is not fully understood, one idea is that BAD, a proapoptotic member, is phosphorylated and inactivated by mitochondria-anchored PKA. It cannot be excluded too that it may facilitate PKA as well as G protein signal transduction, by acting as an adapter for assembling multiprotein complexes. With its RGS domain, it could lead to the interaction to G-alpha proteins, providing a link between the signaling machinery and the downstream kinase. The polypeptide is A-kinase anchor protein 10, mitochondrial (AKAP10) (Sus scrofa (Pig)).